Reading from the N-terminus, the 147-residue chain is MDEKMLNNILDEFLQKCKQKFGDDLISIILFGSYARGTAVEYSDVDLLVIAKNLPKRRIDRHKVLRDIVLEFIYRYGINISPILVEPRDLSLKSINPLICGILTGYKIIYDRDNFWKNYLERIKPIIKRIKPIFIDEEKEWKIADLI.

Positions 32–46 (GSYARGTAVEYSDVD) match the GSX(10)DXD motif motif. D44 and D46 together coordinate Mg(2+).

Belongs to the MntA antitoxin family. Mg(2+) is required as a cofactor.

It catalyses the reaction L-tyrosyl-[protein] + ATP = O-(5'-adenylyl)-L-tyrosyl-[protein] + diphosphate. The catalysed reaction is O-(5'-adenylyl)-L-tyrosyl-[protein] + ATP = O-[5'-(adenylyl-(5'-&gt;3')-adenylyl)]-L-tyrosyl-[protein] + diphosphate. Putative antitoxin component of a putative type VII toxin-antitoxin (TA) system. Its cognate toxin might be MJ1304, which it might AMPylate. The polypeptide is Putative protein adenylyltransferase MJ1305 (Methanocaldococcus jannaschii (strain ATCC 43067 / DSM 2661 / JAL-1 / JCM 10045 / NBRC 100440) (Methanococcus jannaschii)).